Here is a 288-residue protein sequence, read N- to C-terminus: Polyamine aminopropyltransferase (288 aa).

The region spanning 9-242 (SGWLDEYHQG…GLWSWAFASM (234 aa)) is the PABS domain. Gln-36 is an S-methyl-5'-thioadenosine binding site. Spermidine-binding residues include His-67 and Asp-91. Residues Glu-111 and 143–144 (NG) each bind S-methyl-5'-thioadenosine. The active-site Proton acceptor is the Asp-162. Residue Pro-169 participates in S-methyl-5'-thioadenosine binding.

Belongs to the spermidine/spermine synthase family. As to quaternary structure, homodimer or homotetramer.

The protein resides in the cytoplasm. It catalyses the reaction S-adenosyl 3-(methylsulfanyl)propylamine + putrescine = S-methyl-5'-thioadenosine + spermidine + H(+). Its pathway is amine and polyamine biosynthesis; spermidine biosynthesis; spermidine from putrescine: step 1/1. Functionally, catalyzes the irreversible transfer of a propylamine group from the amino donor S-adenosylmethioninamine (decarboxy-AdoMet) to putrescine (1,4-diaminobutane) to yield spermidine. The polypeptide is Polyamine aminopropyltransferase (Prochlorococcus marinus (strain NATL1A)).